We begin with the raw amino-acid sequence, 301 residues long: GTPase Era (301 aa).

The Era-type G domain occupies Tyr-7–Glu-175. The interval Gly-15–Ser-22 is G1. GTP is bound at residue Gly-15 to Ser-22. A G2 region spans residues Gln-41–His-45. A G3 region spans residues Asp-62–Gly-65. Residues Asp-62–Leu-66 and Asn-124–Asp-127 each bind GTP. The G4 stretch occupies residues Asn-124–Asp-127. Residues Ile-154–Ala-156 form a G5 region. One can recognise a KH type-2 domain in the interval Leu-206 to Ser-283.

This sequence belongs to the TRAFAC class TrmE-Era-EngA-EngB-Septin-like GTPase superfamily. Era GTPase family. Monomer.

It localises to the cytoplasm. The protein localises to the cell inner membrane. Its function is as follows. An essential GTPase that binds both GDP and GTP, with rapid nucleotide exchange. Plays a role in 16S rRNA processing and 30S ribosomal subunit biogenesis and possibly also in cell cycle regulation and energy metabolism. The polypeptide is GTPase Era (Escherichia coli O1:K1 / APEC).